Reading from the N-terminus, the 175-residue chain is Bifunctional protein PyrR (175 aa).

Substrate contacts are provided by residues 40-41 (TR), Arg85, 102-110 (DDVLYTGRT), Arg135, and Val159. The short motif at 98 to 110 (VVIIDDVLYTGRT) is the PRPP-binding element.

The protein belongs to the purine/pyrimidine phosphoribosyltransferase family. PyrR subfamily. In terms of assembly, homodimer and homohexamer; in equilibrium.

It catalyses the reaction UMP + diphosphate = 5-phospho-alpha-D-ribose 1-diphosphate + uracil. Functionally, regulates transcriptional attenuation of the pyrimidine nucleotide (pyr) operon by binding in a uridine-dependent manner to specific sites on pyr mRNA. This disrupts an antiterminator hairpin in the RNA and favors formation of a downstream transcription terminator, leading to a reduced expression of downstream genes. Also displays a weak uracil phosphoribosyltransferase activity which is not physiologically significant. In Staphylococcus epidermidis (strain ATCC 35984 / DSM 28319 / BCRC 17069 / CCUG 31568 / BM 3577 / RP62A), this protein is Bifunctional protein PyrR.